A 1906-amino-acid chain; its full sequence is MNFTKQPASLKYLSSMKLITSQDQDFFNFGEVSREFILEQAYVNGYDFHMLHQDMNCIGFVLSIFDEDARDEYEYKDLNCEYHENLFDAVVDSEFDKIWPHLVLKYITYYPCSLNWRGMPTIPIVYVSKHFWYELYRTGFLNKLYHCGSWTDILLLLSGDVETNPGPVETYKDLCRRKNIRKRKSRIREEIKMQQHIDKIIGQENEEYKIINVNMQGIFSFNEEKEIIKSTAWKFNSTLDKTNSIIDNLIPQLEETLAGFRKTYSKCESKIFGTISVVDVCVDLISALLQVSFAKPAMKIASLAVEVFRLIKKYVSNININIDKIKELLSYGKVALNNNNPIIHVTMQSNSPILEVLLQPNIIVSAIFIALSVVFHKKFTYKKLGIEAMIKRLGDLGRAAKGCSDLNVVLNQAITNHMLEHFGKNVLGLKQEDELKVLVEGYRNWCDEVRDLVGHKINSDGELDSKSIVENIMKDVYEIQRIENMYKKGLEISRNIAELKLPTKLTISFNTHMRYLTEVFKSVDTSGAFGNKPRTQPIVIWLFGESGRGKSGMTWPLAIDLNNSLLDNVDEMRNFSKNIYMRNVEQEFWDNYQGQNIVCXDDFGQMRDSSSNPNPEFMELIRTANIAPYPLHMAHLEDKRKTKFTSKVIIMTSNVFEQDVNSLTFPDAFRRRVDLCAEVKNKDEFTKMCWSKSAGKMVQRLDKGKVKKITGDIHSTVPYIVDLIDPESGEVYKTGLEYEEFLDMCLEKTSQCRDDSAKLNDFLMDYAEKRANRSREIDEVCARTMDEAFVDAYDDVIDVNMQIETVDEMELIEPNKLREMIEQCSNKIVYTYEGIAVKITSLAFKLATLNYEEQWEQIKEMKYYVKVSSGVNYLKRVLSQGMKVCEEWMKEMINYVKEHPWMTVSLILGTLIGILTVVGFWKWLCSGDKKKNPIKRHFINTGNVLILPDRELNTFWKNQESLDLRDMYINRVEEHIISLLKLQHKVVLVPKVTKYILTTVENHAKISDKIILITRNRYLNYQGKFVELICGEINQFFIDPETLDTNVEAFASADLKTFVQRKPIVIEGPEFVEAQTSGDQITLRKQTQKVIEAFASSDAITMARKTPKFVESDDVVEVSMQMWKDQVAQKLITNRVLTNLYKICLVKENGDMVPLLNGLFVRSNIMLAPGHLVGFLSDSDTIEIRNLFDVVFRVPWKDVKKVDVVNAFGESKEAVLLCFPKFVCQHTDLVKHFQDSESMSKFKRCEVTLPVLRYSDKMNRFLATLIECDKVEAYDRPYTLNDSSKGQYILRQGLEYTMPTTNGDCGAPLVINETQVIRKIAGIHVAGDARGKAYAESISQKDLIRAFSKIDVSMQIQLDLDQTLNFNQQQXIIPPNAEFGPEDLDFCDLPSLKMIPVGRLSEPLFEPGKTDIRPSLVYGKISEIKTKPAILRNVIVDGKIVNIKHKNLKKCAMDTPYVSKEMTEEAFQLVKSVWLKGMRNELKKVLTYEEAICGNDSSEFISAINRSSSPGFPWIRDRIKGTKGKQGWFGAEGEYILDEDVFEAVKTRIQNAKNGVRTPVMWVDTLKDERRPIEKVDQLKTRVFSNGPMDFSITFRMYYLGFIAHLMENRITNEVSIGTNVYSQDWNKTVRKLKTMGPKVIAGDFSTFDGSLNVCIMEKFADLANEFYDDGSENALIRHVLLMDVYNSTHICGDSVYMMTHSQPSGNPATTPLNCFINSMGLRMVFELCSKKYSALNGTKCYVMKDFSKHVSIVSYGDDNVINFSDEVSEWFNMETITEAFEKLGFTYTDELKGKNGEVPKWRTIEDVQYLKRKFRYDSKRKVWEAPLCMDTILEMPNWCRGSLDIQEGTKVNCENAIMELSMHEEYVFDKWSKVISKAYQKATGDCLDISTYNGYAQERFLNYYL.

The region spanning 513-692 (MRYLTEVFKS…DEFTKMCWSK (180 aa)) is the SF3 helicase domain. 544-551 (GESGRGKS) is an ATP binding site. Positions 1124–1350 (KDQVAQKLIT…KDLIRAFSKI (227 aa)) are protease. The 218-residue stretch at 1126–1343 (QVAQKLITNR…YAESISQKDL (218 aa)) folds into the Peptidase C3 domain. Catalysis depends on for picornain 3C-like protease activity residues His-1171, Glu-1213, and Cys-1305. The RdRp catalytic domain maps to 1638 to 1772 (PKVIAGDFST…NFSDEVSEWF (135 aa)).

Specific enzymatic cleavages in vivo by the viral protease yield a variety of precursors and mature proteins.

The catalysed reaction is RNA(n) + a ribonucleoside 5'-triphosphate = RNA(n+1) + diphosphate. In terms of biological role, replicase polyprotein contains helicase, VPg, protease and RNA-directed RNA polymerase functions. RNA-directed RNA polymerase replicates genomic and antigenomic RNA and transcribes the vial genome. Functionally, the protease generates mature viral proteins from the precursor polyprotein. Its function is as follows. VPg is covalently linked to the 5'-end of genomic RNA. In Apis mellifera (Honeybee), this protein is Replicase polyprotein.